The sequence spans 379 residues: Probable purine permease 11 (379 aa).

10 consecutive transmembrane segments (helical) span residues 43-63 (WVLV…SVLL), 76-96 (WMAT…LLLL), 114-134 (IVLI…LYSV), 144-164 (YSLI…FINA), 167-187 (FTAL…LIAL), 203-223 (IVGF…LSLM), 239-259 (VLEM…IGLF), 294-313 (VCSV…FSNV), 314-330 (ISTL…LVVF), and 334-354 (MSGV…SYVY).

It belongs to the purine permeases (TC 2.A.7.14) family. May form a complex with the potassium channel subunit KAT1.

The protein resides in the membrane. The chain is Probable purine permease 11 (PUP11) from Arabidopsis thaliana (Mouse-ear cress).